The following is a 486-amino-acid chain: 2-isopropylmalate synthase (486 aa).

The 263-residue stretch at 4–266 (VYIFDTTLRD…KTDVNLKEIA (263 aa)) folds into the Pyruvate carboxyltransferase domain. Mn(2+) contacts are provided by Asp-13, His-201, His-203, and Asn-237. The segment at 390–486 (KVEIIHVTSG…LSTDIIEASA (97 aa)) is regulatory domain.

Belongs to the alpha-IPM synthase/homocitrate synthase family. LeuA type 1 subfamily. Mn(2+) is required as a cofactor.

It localises to the cytoplasm. It catalyses the reaction 3-methyl-2-oxobutanoate + acetyl-CoA + H2O = (2S)-2-isopropylmalate + CoA + H(+). The protein operates within amino-acid biosynthesis; L-leucine biosynthesis; L-leucine from 3-methyl-2-oxobutanoate: step 1/4. Catalyzes the condensation of the acetyl group of acetyl-CoA with 3-methyl-2-oxobutanoate (2-ketoisovalerate) to form 3-carboxy-3-hydroxy-4-methylpentanoate (2-isopropylmalate). The chain is 2-isopropylmalate synthase from Pyrococcus abyssi (strain GE5 / Orsay).